The sequence spans 221 residues: Large ribosomal subunit protein uL3 (221 aa).

The protein belongs to the universal ribosomal protein uL3 family. In terms of assembly, part of the 50S ribosomal subunit. Forms a cluster with proteins L14 and L19.

One of the primary rRNA binding proteins, it binds directly near the 3'-end of the 23S rRNA, where it nucleates assembly of the 50S subunit. The polypeptide is Large ribosomal subunit protein uL3 (Chlamydia trachomatis serovar L2 (strain ATCC VR-902B / DSM 19102 / 434/Bu)).